A 143-amino-acid chain; its full sequence is Interleukin-3 (143 aa).

Residues 1–23 (MSSFPILHLLLLLLGCQVPQAQG) form the signal peptide. Residue asparagine 79 is glycosylated (N-linked (GlcNAc...) asparagine).

This sequence belongs to the IL-3 family. As to quaternary structure, monomer.

The protein localises to the secreted. Granulocyte/macrophage colony-stimulating factors are cytokines that act in hematopoiesis by controlling the production, differentiation, and function of 2 related white cell populations of the blood, the granulocytes and the monocytes-macrophages. In terms of biological role, this CSF induces granulocytes, macrophages, mast cells, stem cells, erythroid cells, eosinophils and megakaryocytes. The chain is Interleukin-3 (IL3) from Canis lupus familiaris (Dog).